We begin with the raw amino-acid sequence, 634 residues long: Knob-associated histidine-rich protein (634 aa).

Positions 1-34 are cleaved as a signal peptide; that stretch reads MKSFKNKNTLRRKKAFPVFTKILLVSFLVWVLKC. N-linked (GlcNAc...) asparagine glycosylation is present at Asn42. Residues 57 to 87 are compositionally biased toward basic residues; that stretch reads AQKQHEHHHHHHHQHQHQHQAPHQAHHHHHH. Disordered stretches follow at residues 57-143 and 347-634; these read AQKQ…QVFR and SSVN…GCCG. Residues 95-104 show a composition bias toward low complexity; sequence PQVHQQVHGQ. The segment covering 108–117 has biased composition (basic residues); it reads HHHHHHHHHQ. Composition is skewed to basic and acidic residues over residues 354–375 and 396–405; these read KHGD…EGEK and KDNEDAESVK. Over residues 406–422 the composition is skewed to basic residues; that stretch reads SKKHKSHDCEKKKSKKH. Basic and acidic residues-rich tracts occupy residues 423–444 and 453–493; these read KDNE…GEKH and KTNE…KKVD. Polar residues predominate over residues 494 to 505; the sequence is STSADNKSTNAA. Positions 509–520 are enriched in basic and acidic residues; the sequence is AKDKTQGGKTDK. 4 consecutive repeat copies span residues 540 to 549, 550 to 559, 560 to 569, and 570 to 579. The interval 540 to 580 is 4 X 10 AA tandem repeats of [TS]-[KE]-[GE]-A-T-K-[EG]-A-S-T; it reads TKGATKEASTSKEATKEASTSKGATKEASTTEGATKGASTT. The span at 567–591 shows a compositional bias: low complexity; that stretch reads ASTTEGATKGASTTAGSTTGATTGA. Over residues 605 to 620 the composition is skewed to polar residues; the sequence is AANNGEQVMSRGQAQL. Positions 625–634 are enriched in basic residues; it reads KKKKKRGCCG.

The protein localises to the secreted. In terms of biological role, KAHRP might mimick human histidine-rich glycoproteins to anchor host thrombospondin or a parasite analog in a binding complex with the endothelial cell receptor. The sequence is that of Knob-associated histidine-rich protein from Plasmodium falciparum (isolate FCR-3 / Gambia).